We begin with the raw amino-acid sequence, 164 residues long: Transcription elongation factor GreA (164 aa).

Residues 12–38 (RRLERELERLKKERPGVILAIKEAREE) adopt a coiled-coil conformation.

This sequence belongs to the GreA/GreB family.

In terms of biological role, necessary for efficient RNA polymerase transcription elongation past template-encoded arresting sites. The arresting sites in DNA have the property of trapping a certain fraction of elongating RNA polymerases that pass through, resulting in locked ternary complexes. Cleavage of the nascent transcript by cleavage factors such as GreA or GreB allows the resumption of elongation from the new 3'terminus. GreA releases sequences of 2 to 3 nucleotides. The sequence is that of Transcription elongation factor GreA from Solidesulfovibrio magneticus (strain ATCC 700980 / DSM 13731 / RS-1) (Desulfovibrio magneticus).